A 354-amino-acid chain; its full sequence is Uroporphyrinogen decarboxylase (354 aa).

Residues Arg-27–Arg-31, Asp-77, Tyr-154, Thr-209, and His-327 each bind substrate.

It belongs to the uroporphyrinogen decarboxylase family. In terms of assembly, homodimer.

It is found in the cytoplasm. The enzyme catalyses uroporphyrinogen III + 4 H(+) = coproporphyrinogen III + 4 CO2. The protein operates within porphyrin-containing compound metabolism; protoporphyrin-IX biosynthesis; coproporphyrinogen-III from 5-aminolevulinate: step 4/4. Functionally, catalyzes the decarboxylation of four acetate groups of uroporphyrinogen-III to yield coproporphyrinogen-III. The sequence is that of Uroporphyrinogen decarboxylase from Pectobacterium atrosepticum (strain SCRI 1043 / ATCC BAA-672) (Erwinia carotovora subsp. atroseptica).